We begin with the raw amino-acid sequence, 130 residues long: Anti-adapter protein IraD (130 aa).

Belongs to the GpW/Gp25 family. IraD subfamily. In terms of assembly, interacts with RssB.

Its subcellular location is the cytoplasm. Functionally, inhibits RpoS proteolysis by regulating RssB activity, thereby increasing the stability of the sigma stress factor RpoS during oxidative stress. Its effect on RpoS stability is due to its interaction with RssB, which probably blocks the interaction of RssB with RpoS, and the consequent delivery of the RssB-RpoS complex to the ClpXP protein degradation pathway. This chain is Anti-adapter protein IraD, found in Escherichia coli O139:H28 (strain E24377A / ETEC).